Consider the following 315-residue polypeptide: Methionyl-tRNA formyltransferase (315 aa).

113–116 (SILP) contributes to the (6S)-5,6,7,8-tetrahydrofolate binding site.

Belongs to the Fmt family.

It catalyses the reaction L-methionyl-tRNA(fMet) + (6R)-10-formyltetrahydrofolate = N-formyl-L-methionyl-tRNA(fMet) + (6S)-5,6,7,8-tetrahydrofolate + H(+). Its function is as follows. Attaches a formyl group to the free amino group of methionyl-tRNA(fMet). The formyl group appears to play a dual role in the initiator identity of N-formylmethionyl-tRNA by promoting its recognition by IF2 and preventing the misappropriation of this tRNA by the elongation apparatus. The polypeptide is Methionyl-tRNA formyltransferase (Vibrio cholerae serotype O1 (strain M66-2)).